Reading from the N-terminus, the 386-residue chain is Bifunctional enzyme IspD/IspF (386 aa).

Residues 1–229 (MIRGERVIGI…RARALLEAPV (229 aa)) form a 2-C-methyl-D-erythritol 4-phosphate cytidylyltransferase region. A 2-C-methyl-D-erythritol 2,4-cyclodiphosphate synthase region spans residues 230–386 (ATGVGYDTHR…AIALLVRAAG (157 aa)). Residues Asp236 and His238 each coordinate a divalent metal cation. 4-CDP-2-C-methyl-D-erythritol 2-phosphate contacts are provided by residues 236–238 (DTH) and 261–262 (HS). Position 269 (His269) interacts with a divalent metal cation. 4-CDP-2-C-methyl-D-erythritol 2-phosphate is bound by residues 283 to 285 (DLG), 288 to 292 (FPDTD), 359 to 362 (TTGE), Phe366, and Arg369.

In the N-terminal section; belongs to the IspD/TarI cytidylyltransferase family. IspD subfamily. It in the C-terminal section; belongs to the IspF family. The cofactor is a divalent metal cation.

The catalysed reaction is 2-C-methyl-D-erythritol 4-phosphate + CTP + H(+) = 4-CDP-2-C-methyl-D-erythritol + diphosphate. It catalyses the reaction 4-CDP-2-C-methyl-D-erythritol 2-phosphate = 2-C-methyl-D-erythritol 2,4-cyclic diphosphate + CMP. Its pathway is isoprenoid biosynthesis; isopentenyl diphosphate biosynthesis via DXP pathway; isopentenyl diphosphate from 1-deoxy-D-xylulose 5-phosphate: step 2/6. It participates in isoprenoid biosynthesis; isopentenyl diphosphate biosynthesis via DXP pathway; isopentenyl diphosphate from 1-deoxy-D-xylulose 5-phosphate: step 4/6. Functionally, bifunctional enzyme that catalyzes the formation of 4-diphosphocytidyl-2-C-methyl-D-erythritol from CTP and 2-C-methyl-D-erythritol 4-phosphate (MEP) (IspD), and catalyzes the conversion of 4-diphosphocytidyl-2-C-methyl-D-erythritol 2-phosphate (CDP-ME2P) to 2-C-methyl-D-erythritol 2,4-cyclodiphosphate (ME-CPP) with a corresponding release of cytidine 5-monophosphate (CMP) (IspF). This Anaeromyxobacter dehalogenans (strain 2CP-C) protein is Bifunctional enzyme IspD/IspF.